The primary structure comprises 155 residues: Ribonuclease H (155 aa).

The RNase H type-1 domain occupies 9–150 (DGQQVEMWTD…ADALANQGVE (142 aa)). Mg(2+)-binding residues include Asp-18, Glu-56, Asp-78, and Asp-142.

Belongs to the RNase H family. In terms of assembly, monomer. Mg(2+) serves as cofactor.

It is found in the cytoplasm. The enzyme catalyses Endonucleolytic cleavage to 5'-phosphomonoester.. Its function is as follows. Endonuclease that specifically degrades the RNA of RNA-DNA hybrids. The polypeptide is Ribonuclease H (Bordetella bronchiseptica (strain ATCC BAA-588 / NCTC 13252 / RB50) (Alcaligenes bronchisepticus)).